Here is a 109-residue protein sequence, read N- to C-terminus: A-type ATP synthase subunit F (109 aa).

This sequence belongs to the V-ATPase F subunit family. Has multiple subunits with at least A(3), B(3), C, D, E, F, H, I and proteolipid K(x).

The protein localises to the cell membrane. Its function is as follows. Component of the A-type ATP synthase that produces ATP from ADP in the presence of a proton gradient across the membrane. The protein is A-type ATP synthase subunit F of Halorubrum lacusprofundi (strain ATCC 49239 / DSM 5036 / JCM 8891 / ACAM 34).